The chain runs to 340 residues: Holliday junction branch migration complex subunit RuvB (340 aa).

The large ATPase domain (RuvB-L) stretch occupies residues 1-184 (MNENLDPTTK…FGISSRLQYY (184 aa)). ATP is bound by residues Leu23, Arg24, Gly65, Lys68, Thr69, Thr70, 131–133 (EDF), Arg174, Tyr184, and Arg221. Thr69 contributes to the Mg(2+) binding site. Residues 185–255 (STELLTTIVE…ISKYALKALN (71 aa)) are small ATPAse domain (RuvB-S). The tract at residues 258–340 (AHGLDEMDNK…INTNIQGGLF (83 aa)) is head domain (RuvB-H). DNA-binding residues include Arg313 and Arg318.

The protein belongs to the RuvB family. As to quaternary structure, homohexamer. Forms an RuvA(8)-RuvB(12)-Holliday junction (HJ) complex. HJ DNA is sandwiched between 2 RuvA tetramers; dsDNA enters through RuvA and exits via RuvB. An RuvB hexamer assembles on each DNA strand where it exits the tetramer. Each RuvB hexamer is contacted by two RuvA subunits (via domain III) on 2 adjacent RuvB subunits; this complex drives branch migration. In the full resolvosome a probable DNA-RuvA(4)-RuvB(12)-RuvC(2) complex forms which resolves the HJ.

The protein localises to the cytoplasm. It catalyses the reaction ATP + H2O = ADP + phosphate + H(+). The RuvA-RuvB-RuvC complex processes Holliday junction (HJ) DNA during genetic recombination and DNA repair, while the RuvA-RuvB complex plays an important role in the rescue of blocked DNA replication forks via replication fork reversal (RFR). RuvA specifically binds to HJ cruciform DNA, conferring on it an open structure. The RuvB hexamer acts as an ATP-dependent pump, pulling dsDNA into and through the RuvAB complex. RuvB forms 2 homohexamers on either side of HJ DNA bound by 1 or 2 RuvA tetramers; 4 subunits per hexamer contact DNA at a time. Coordinated motions by a converter formed by DNA-disengaged RuvB subunits stimulates ATP hydrolysis and nucleotide exchange. Immobilization of the converter enables RuvB to convert the ATP-contained energy into a lever motion, pulling 2 nucleotides of DNA out of the RuvA tetramer per ATP hydrolyzed, thus driving DNA branch migration. The RuvB motors rotate together with the DNA substrate, which together with the progressing nucleotide cycle form the mechanistic basis for DNA recombination by continuous HJ branch migration. Branch migration allows RuvC to scan DNA until it finds its consensus sequence, where it cleaves and resolves cruciform DNA. The protein is Holliday junction branch migration complex subunit RuvB of Flavobacterium johnsoniae (strain ATCC 17061 / DSM 2064 / JCM 8514 / BCRC 14874 / CCUG 350202 / NBRC 14942 / NCIMB 11054 / UW101) (Cytophaga johnsonae).